We begin with the raw amino-acid sequence, 556 residues long: 2-succinyl-5-enolpyruvyl-6-hydroxy-3-cyclohexene-1-carboxylate synthase (556 aa).

This sequence belongs to the TPP enzyme family. MenD subfamily. In terms of assembly, homodimer. Mg(2+) serves as cofactor. Requires Mn(2+) as cofactor. The cofactor is thiamine diphosphate.

It catalyses the reaction isochorismate + 2-oxoglutarate + H(+) = 5-enolpyruvoyl-6-hydroxy-2-succinyl-cyclohex-3-ene-1-carboxylate + CO2. It participates in quinol/quinone metabolism; 1,4-dihydroxy-2-naphthoate biosynthesis; 1,4-dihydroxy-2-naphthoate from chorismate: step 2/7. It functions in the pathway quinol/quinone metabolism; menaquinone biosynthesis. In terms of biological role, catalyzes the thiamine diphosphate-dependent decarboxylation of 2-oxoglutarate and the subsequent addition of the resulting succinic semialdehyde-thiamine pyrophosphate anion to isochorismate to yield 2-succinyl-5-enolpyruvyl-6-hydroxy-3-cyclohexene-1-carboxylate (SEPHCHC). This chain is 2-succinyl-5-enolpyruvyl-6-hydroxy-3-cyclohexene-1-carboxylate synthase, found in Salmonella typhimurium (strain LT2 / SGSC1412 / ATCC 700720).